Reading from the N-terminus, the 394-residue chain is MALLETRTEPMVLNMGPHHPSMHGVLRLIVTLDGENVIDCEPVIGYLHRGMEKIAENRSNVMFVPYVSRWDYAAGMFNEAITVNAPEKLANIPVPKRASYIRVIMLELNRIANHLLWLGPFLADVGAQTPFFYIFRERELIYDLWEAATGQRLINNNYFRIGGVAADLPYGWLEKCIDFCDYFQAKVDEYERLITDNPIFRRRVEGIGVISREEALNWSLSGPMLRGSGVKWDLRRVDHYECYDDFDWDVITAEEGDCFARYRVRVQEMRESLKIIRQACAGIPGGPYENLEARRMAEGKKSEWYGPDYQYVSKKVAPTFKIPAGEHYVRLESGKGELGVFIQGADDICPWRFKIRAPDFNNLQILPQLLQGVKVADIMAILGSIDVIMGSVDR.

Belongs to the complex I 49 kDa subunit family. NDH-1 can be composed of about 15 different subunits; different subcomplexes with different compositions have been identified which probably have different functions.

The protein resides in the cellular thylakoid membrane. The catalysed reaction is a plastoquinone + NADH + (n+1) H(+)(in) = a plastoquinol + NAD(+) + n H(+)(out). The enzyme catalyses a plastoquinone + NADPH + (n+1) H(+)(in) = a plastoquinol + NADP(+) + n H(+)(out). NDH-1 shuttles electrons from an unknown electron donor, via FMN and iron-sulfur (Fe-S) centers, to quinones in the respiratory and/or the photosynthetic chain. The immediate electron acceptor for the enzyme in this species is believed to be plastoquinone. Couples the redox reaction to proton translocation, and thus conserves the redox energy in a proton gradient. Cyanobacterial NDH-1 also plays a role in inorganic carbon-concentration. The protein is NAD(P)H-quinone oxidoreductase subunit H of Synechococcus sp. (strain ATCC 27144 / PCC 6301 / SAUG 1402/1) (Anacystis nidulans).